The chain runs to 261 residues: Lys-63-specific deubiquitinase BRCC36 (261 aa).

Residues 6–149 (VHIQGDAFLV…YTCFQSVQAQ (144 aa)) form the MPN domain. Zn(2+)-binding residues include His-92, His-94, and Asp-105. A JAMM motif motif is present at residues 92–105 (HSHPHITVWPSHVD).

The protein belongs to the peptidase M67A family. BRCC36 subfamily. In terms of assembly, component of the BRCA1-A complex, at least composed of brca1, bard1, uimc1/rap80, abraxas1, brcc3/brcc36, babam2 and babam1/nba1. In the BRCA1-A complex, interacts directly with ABRAXAS1 and babam2. Component of the BRISC complex, at least composed of ABRAXAS2, brcc3/brcc36, babam2 and babam1/nba1. Within the complex, interacts directly with abraxas2. Both the BRCA1-A complex and the BRISC complex bind polyubiquitin. Zn(2+) is required as a cofactor.

The protein localises to the nucleus. The protein resides in the cytoplasm. Its subcellular location is the cytoskeleton. It localises to the spindle pole. Its function is as follows. Metalloprotease that specifically cleaves 'Lys-63'-linked polyubiquitin chains. Does not have activity toward 'Lys-48'-linked polyubiquitin chains. Component of the BRCA1-A complex, a complex that specifically recognizes 'Lys-63'-linked ubiquitinated histones H2A and H2AX at DNA lesions sites, leading to target the brca1-bard1 heterodimer to sites of DNA damage at double-strand breaks (DSBs). In the BRCA1-A complex, it specifically removes 'Lys-63'-linked ubiquitin on histones H2A and H2AX, antagonizing the rnf8-dependent ubiquitination at double-strand breaks (DSBs). Catalytic subunit of the BRISC complex, a multiprotein complex that specifically cleaves 'Lys-63'-linked ubiquitin in various substrates. Mediates the specific 'Lys-63'-specific deubiquitination associated with the COP9 signalosome complex (CSN), via the interaction of the BRISC complex with the CSN complex. The BRISC complex is required for normal mitotic spindle assembly and microtubule attachment to kinetochores via its role in deubiquitinating numa1. Plays a role in interferon signaling via its role in the deubiquitination of the interferon receptor ifnar1; deubiquitination increases ifnar1 activity by enhancing its stability and cell surface expression. Acts as a regulator of the NLRP3 inflammasome by mediating deubiquitination of nlrp3. Down-regulates the response to bacterial lipopolysaccharide (LPS) via its role in ifnar1 deubiquitination. The chain is Lys-63-specific deubiquitinase BRCC36 (brcc3) from Xenopus laevis (African clawed frog).